Here is a 215-residue protein sequence, read N- to C-terminus: MKLILLILTAYLLGSIPTGLWIGQYFYNINLREHGSGNTGTTNTFRILGLKAGAATLLIDIFKGTLATLLPVLVGASNISPITIGFFAVLGHTFPIFAGFKGGKAVATSAGVLLGFAPLYLLFLAAVFVLTLYLFSMISLASLTASVVAVISVLTFPAAHFLLPSYDWLLTITIVVLAAIIILRHQDNMKRIKQQSENLIPWGLNLSKQQPASHH.

6 consecutive transmembrane segments (helical) span residues 3 to 23 (LILL…LWIG), 42 to 61 (TNTF…LIDI), 68 to 90 (TLLP…FAVL), 110 to 130 (AGVL…VFVL), 134 to 154 (LFSM…ISVL), and 162 to 182 (LLPS…AIII).

Belongs to the PlsY family. In terms of assembly, probably interacts with PlsX.

The protein localises to the cell membrane. The catalysed reaction is an acyl phosphate + sn-glycerol 3-phosphate = a 1-acyl-sn-glycero-3-phosphate + phosphate. The protein operates within lipid metabolism; phospholipid metabolism. Its function is as follows. Catalyzes the transfer of an acyl group from acyl-phosphate (acyl-PO(4)) to glycerol-3-phosphate (G3P) to form lysophosphatidic acid (LPA). This enzyme utilizes acyl-phosphate as fatty acyl donor, but not acyl-CoA or acyl-ACP. The sequence is that of Glycerol-3-phosphate acyltransferase from Streptococcus equi subsp. equi (strain 4047).